Reading from the N-terminus, the 406-residue chain is Argininosuccinate synthase (406 aa).

8–16 (AYSGGLDTS) contacts ATP. Y86 lines the L-citrulline pocket. G116 serves as a coordination point for ATP. Residues T118, N122, and D123 each contribute to the L-aspartate site. Residue N122 coordinates L-citrulline. L-citrulline contacts are provided by R126, S174, E259, and Y271.

This sequence belongs to the argininosuccinate synthase family. Type 1 subfamily. Homotetramer.

The protein resides in the cytoplasm. It carries out the reaction L-citrulline + L-aspartate + ATP = 2-(N(omega)-L-arginino)succinate + AMP + diphosphate + H(+). Its pathway is amino-acid biosynthesis; L-arginine biosynthesis; L-arginine from L-ornithine and carbamoyl phosphate: step 2/3. The protein is Argininosuccinate synthase of Lacticaseibacillus paracasei (strain ATCC 334 / BCRC 17002 / CCUG 31169 / CIP 107868 / KCTC 3260 / NRRL B-441) (Lactobacillus paracasei).